The following is a 197-amino-acid chain: Nucleoid occlusion factor SlmA (197 aa).

The 61-residue stretch at 7 to 67 (INRREHILQC…GLIEFIEESL (61 aa)) folds into the HTH tetR-type domain. The segment at residues 30–49 (TTAKLASEVGVSEAALYRHF) is a DNA-binding region (H-T-H motif). Residues 110–130 (ALLGENERLRSRISSLFAKIE) are a coiled coil.

Belongs to the nucleoid occlusion factor SlmA family. Homodimer. Interacts with FtsZ.

The protein resides in the cytoplasm. It localises to the nucleoid. Its function is as follows. Required for nucleoid occlusion (NO) phenomenon, which prevents Z-ring formation and cell division over the nucleoid. Acts as a DNA-associated cell division inhibitor that binds simultaneously chromosomal DNA and FtsZ, and disrupts the assembly of FtsZ polymers. SlmA-DNA-binding sequences (SBS) are dispersed on non-Ter regions of the chromosome, preventing FtsZ polymerization at these regions. This Shewanella sp. (strain W3-18-1) protein is Nucleoid occlusion factor SlmA.